The chain runs to 141 residues: ATP synthase epsilon chain (141 aa).

It belongs to the ATPase epsilon chain family. As to quaternary structure, F-type ATPases have 2 components, CF(1) - the catalytic core - and CF(0) - the membrane proton channel. CF(1) has five subunits: alpha(3), beta(3), gamma(1), delta(1), epsilon(1). CF(0) has three main subunits: a, b and c.

It localises to the cell inner membrane. Its function is as follows. Produces ATP from ADP in the presence of a proton gradient across the membrane. The chain is ATP synthase epsilon chain from Aromatoleum aromaticum (strain DSM 19018 / LMG 30748 / EbN1) (Azoarcus sp. (strain EbN1)).